Reading from the N-terminus, the 372-residue chain is MTAAPLTFTLPDLLANFPWKRNLSEYYPECKTESSAWTESFHPFDDEGLKGFNLCDFNLLASLAYSPREREIIRLGCDLMNIFYVFDEYTDIADGDGADKIRDIIMDAFRNPHKPRPEGELLVGEMARDFWIRASGYVSPDAHCLTHFLRDFDTYTAAVVREADDRAKRVYRTFEDYLSIRRDSSGCLPSFALCEFGLDLPEEAYHHPRMAALREQSTDLIAIGNDIDSYAMEKARGLELHNSVELIINEHGLDVQGAINWLERYAAGVHASFLDNVANMPSWGEDVDRRVKMYIDGLAQWVRGNDDWTFESGRYFGDKGLEVQKTRVMSLLPASKVSLRSRPKAVGHVPKKLLRYFRYSTMYFFGFHVLAK.

Residues Asp-87, Asn-225, Ser-229, and Glu-233 each coordinate Mg(2+). The DDXXD motif motif lies at Asp-87–Asp-91. Arg-314 and Tyr-315 together coordinate (2E,6E)-farnesyl diphosphate.

The protein belongs to the terpene synthase family. Mg(2+) serves as cofactor.

The catalysed reaction is (2E,6E)-farnesyl diphosphate = gamma-muurolene + diphosphate. The enzyme catalyses (2E,6E)-farnesyl diphosphate = delta-cadinene + diphosphate. Functionally, terpene cyclase that catalyzes the cyclization of farnesyl diphosphate (FPP) to various sesquiterpenes, including gamma-muurolene, beta-cadinene and delta-cadinene. In Cyclocybe aegerita (Black poplar mushroom), this protein is Sesquiterpene synthase Agr9.